Reading from the N-terminus, the 338-residue chain is Phosphate acyltransferase (338 aa).

Belongs to the PlsX family. As to quaternary structure, homodimer. Probably interacts with PlsY.

Its subcellular location is the cytoplasm. It catalyses the reaction a fatty acyl-[ACP] + phosphate = an acyl phosphate + holo-[ACP]. It participates in lipid metabolism; phospholipid metabolism. Its function is as follows. Catalyzes the reversible formation of acyl-phosphate (acyl-PO(4)) from acyl-[acyl-carrier-protein] (acyl-ACP). This enzyme utilizes acyl-ACP as fatty acyl donor, but not acyl-CoA. This chain is Phosphate acyltransferase, found in Salinibacter ruber (strain DSM 13855 / M31).